Consider the following 502-residue polypeptide: Cytochrome P450 81D1 (502 aa).

A helical transmembrane segment spans residues isoleucine 6–leucine 26. Heme is bound at residue cysteine 440.

The protein belongs to the cytochrome P450 family. The cofactor is heme.

The protein resides in the membrane. The sequence is that of Cytochrome P450 81D1 (CYP81D1) from Arabidopsis thaliana (Mouse-ear cress).